Reading from the N-terminus, the 738-residue chain is Cleavage and polyadenylation specificity factor subunit 2 (738 aa).

It belongs to the metallo-beta-lactamase superfamily. RNA-metabolizing metallo-beta-lactamase-like family. CPSF2/YSH1 subfamily. As to quaternary structure, CPSF is a heterotetramer composed of four distinct subunits 160, 100, 70 and 30 kDa.

The protein resides in the nucleus. CPSF plays a key role in pre-mRNA 3'-end formation, recognizing the AAUAAA signal sequence and interacting with poly(A)polymerase and other factors to bring about cleavage and poly(A) addition. This chain is Cleavage and polyadenylation specificity factor subunit 2, found in Oryza sativa subsp. japonica (Rice).